Here is a 98-residue protein sequence, read N- to C-terminus: 10 kDa chaperonin (98 aa).

It belongs to the GroES chaperonin family. In terms of assembly, forms stable complexes with CPN60 in the presence of ATP.

It localises to the cytoplasm. In terms of biological role, seems to function only as a co-chaperone, along with cpn60, and in certain cases is essential for the discharge of biologically active proteins from cpn60. This is 10 kDa chaperonin from Brassica napus (Rape).